A 415-amino-acid chain; its full sequence is Gamma-glutamyl phosphate reductase (415 aa).

Belongs to the gamma-glutamyl phosphate reductase family.

It is found in the cytoplasm. It carries out the reaction L-glutamate 5-semialdehyde + phosphate + NADP(+) = L-glutamyl 5-phosphate + NADPH + H(+). The protein operates within amino-acid biosynthesis; L-proline biosynthesis; L-glutamate 5-semialdehyde from L-glutamate: step 2/2. Its function is as follows. Catalyzes the NADPH-dependent reduction of L-glutamate 5-phosphate into L-glutamate 5-semialdehyde and phosphate. The product spontaneously undergoes cyclization to form 1-pyrroline-5-carboxylate. The protein is Gamma-glutamyl phosphate reductase of Salmonella dublin (strain CT_02021853).